We begin with the raw amino-acid sequence, 51 residues long: Large ribosomal subunit protein eL39y (51 aa).

Positions 1 to 21 are disordered; sequence MPSHKSFMIKKKLGKKMRQNR. A compositionally biased stretch (basic residues) spans 7–19; sequence FMIKKKLGKKMRQ.

Belongs to the eukaryotic ribosomal protein eL39 family.

This Arabidopsis thaliana (Mouse-ear cress) protein is Large ribosomal subunit protein eL39y (RPL39B).